A 321-amino-acid polypeptide reads, in one-letter code: Phosphate acyltransferase (321 aa).

The protein belongs to the PlsX family. As to quaternary structure, homodimer. Probably interacts with PlsY.

The protein localises to the cytoplasm. The catalysed reaction is a fatty acyl-[ACP] + phosphate = an acyl phosphate + holo-[ACP]. The protein operates within lipid metabolism; phospholipid metabolism. Functionally, catalyzes the reversible formation of acyl-phosphate (acyl-PO(4)) from acyl-[acyl-carrier-protein] (acyl-ACP). This enzyme utilizes acyl-ACP as fatty acyl donor, but not acyl-CoA. This is Phosphate acyltransferase from Chlamydia trachomatis serovar L2 (strain ATCC VR-902B / DSM 19102 / 434/Bu).